The chain runs to 229 residues: Large ribosomal subunit protein uL4 (229 aa).

The disordered stretch occupies residues 62–103 (SRRQGTHQVKNRAAVSGSGKKPWKQKGTGRARHSSRRSPIWV). Residues 82–97 (KPWKQKGTGRARHSSR) show a composition bias toward basic residues.

It belongs to the universal ribosomal protein uL4 family. In terms of assembly, part of the 50S ribosomal subunit.

Its function is as follows. One of the primary rRNA binding proteins, this protein initially binds near the 5'-end of the 23S rRNA. It is important during the early stages of 50S assembly. It makes multiple contacts with different domains of the 23S rRNA in the assembled 50S subunit and ribosome. Functionally, forms part of the polypeptide exit tunnel. The protein is Large ribosomal subunit protein uL4 of Mycoplasmopsis synoviae (strain 53) (Mycoplasma synoviae).